The sequence spans 287 residues: tRNA uridine(34) hydroxylase (287 aa).

The 95-residue stretch at 132-226 folds into the Rhodanese domain; sequence QGRPVVMLDT…YFEEVGGAHY (95 aa). Residue Cys-186 is the Cysteine persulfide intermediate of the active site.

Belongs to the TrhO family.

It carries out the reaction uridine(34) in tRNA + AH2 + O2 = 5-hydroxyuridine(34) in tRNA + A + H2O. In terms of biological role, catalyzes oxygen-dependent 5-hydroxyuridine (ho5U) modification at position 34 in tRNAs. The chain is tRNA uridine(34) hydroxylase from Paraburkholderia phytofirmans (strain DSM 17436 / LMG 22146 / PsJN) (Burkholderia phytofirmans).